The sequence spans 189 residues: 3-hydroxyanthranilate 3,4-dioxygenase (189 aa).

Residue Arg50 participates in O2 binding. Fe cation contacts are provided by His54, Glu60, and His102. Glu60 serves as a coordination point for substrate. Arg106 and Glu116 together coordinate substrate. A divalent metal cation-binding residues include Cys131, Cys136, Cys170, and Cys173.

It belongs to the 3-HAO family. The cofactor is Fe(2+).

The protein resides in the cytoplasm. It catalyses the reaction 3-hydroxyanthranilate + O2 = (2Z,4Z)-2-amino-3-carboxymuconate 6-semialdehyde. It participates in cofactor biosynthesis; NAD(+) biosynthesis; quinolinate from L-kynurenine: step 3/3. Catalyzes the oxidative ring opening of 3-hydroxyanthranilate to 2-amino-3-carboxymuconate semialdehyde, which spontaneously cyclizes to quinolinate. This is 3-hydroxyanthranilate 3,4-dioxygenase (bna1) from Aspergillus niger (strain ATCC MYA-4892 / CBS 513.88 / FGSC A1513).